Here is a 235-residue protein sequence, read N- to C-terminus: uncharacterized protein (235 aa).

This sequence to E.coli YbeR.

This is an uncharacterized protein from Escherichia coli (strain K12).